Consider the following 34-residue polypeptide: Photosystem II reaction center protein Psb30 (34 aa).

The chain crosses the membrane as a helical span at residues 6–26; the sequence is IVAQLLSLALVTLSGPAVIFL.

This sequence belongs to the Psb30/Ycf12 family. PSII is composed of 1 copy each of membrane proteins PsbA, PsbB, PsbC, PsbD, PsbE, PsbF, PsbH, PsbI, PsbJ, PsbK, PsbL, PsbM, PsbT, PsbX, PsbY, PsbZ, Psb30/Ycf12, peripheral proteins of the oxygen-evolving complex and a large number of cofactors. It forms dimeric complexes.

Its subcellular location is the plastid. It localises to the chloroplast thylakoid membrane. Its function is as follows. A core subunit of photosystem II (PSII), probably helps stabilize the reaction center. The sequence is that of Photosystem II reaction center protein Psb30 from Emiliania huxleyi (Coccolithophore).